We begin with the raw amino-acid sequence, 31 residues long: Cytochrome b6-f complex subunit 6 (31 aa).

Residues 4–24 (LLSYFGLLLAALISTLVLFIG) traverse the membrane as a helical segment.

This sequence belongs to the PetL family. As to quaternary structure, the 4 large subunits of the cytochrome b6-f complex are cytochrome b6, subunit IV (17 kDa polypeptide, PetD), cytochrome f and the Rieske protein, while the 4 small subunits are PetG, PetL, PetM and PetN. The complex functions as a dimer.

It is found in the plastid. The protein resides in the chloroplast thylakoid membrane. Component of the cytochrome b6-f complex, which mediates electron transfer between photosystem II (PSII) and photosystem I (PSI), cyclic electron flow around PSI, and state transitions. PetL is important for photoautotrophic growth as well as for electron transfer efficiency and stability of the cytochrome b6-f complex. The chain is Cytochrome b6-f complex subunit 6 from Psilotum nudum (Whisk fern).